Consider the following 162-residue polypeptide: Cyclic pyranopterin monophosphate synthase (162 aa).

Substrate is bound by residues 75 to 77 and 113 to 114; these read LCH and ME. The active site involves Asp128.

Belongs to the MoaC family. Homohexamer; trimer of dimers.

The enzyme catalyses (8S)-3',8-cyclo-7,8-dihydroguanosine 5'-triphosphate = cyclic pyranopterin phosphate + diphosphate. It participates in cofactor biosynthesis; molybdopterin biosynthesis. Its function is as follows. Catalyzes the conversion of (8S)-3',8-cyclo-7,8-dihydroguanosine 5'-triphosphate to cyclic pyranopterin monophosphate (cPMP). The polypeptide is Cyclic pyranopterin monophosphate synthase (Burkholderia ambifaria (strain ATCC BAA-244 / DSM 16087 / CCUG 44356 / LMG 19182 / AMMD) (Burkholderia cepacia (strain AMMD))).